The sequence spans 341 residues: Phosphate acyltransferase (341 aa).

This sequence belongs to the PlsX family. As to quaternary structure, homodimer. Probably interacts with PlsY.

The protein resides in the cytoplasm. It catalyses the reaction a fatty acyl-[ACP] + phosphate = an acyl phosphate + holo-[ACP]. Its pathway is lipid metabolism; phospholipid metabolism. In terms of biological role, catalyzes the reversible formation of acyl-phosphate (acyl-PO(4)) from acyl-[acyl-carrier-protein] (acyl-ACP). This enzyme utilizes acyl-ACP as fatty acyl donor, but not acyl-CoA. In Elusimicrobium minutum (strain Pei191), this protein is Phosphate acyltransferase.